Reading from the N-terminus, the 955-residue chain is Beta-agarase B (955 aa).

This sequence belongs to the glycosyl hydrolase 50 family.

It carries out the reaction Hydrolysis of (1-&gt;4)-beta-D-galactosidic linkages in agarose, giving the tetramer as the predominant product.. Hydrolyzes agarose to yield predominantly neoagarotetraose and neoagarohexaose. This Vibrio sp. (strain JT0107) protein is Beta-agarase B (agaB).